An 863-amino-acid polypeptide reads, in one-letter code: Ubiquitin carboxyl-terminal hydrolase 13 (863 aa).

Serine 114 bears the Phosphoserine mark. Threonine 122 bears the Phosphothreonine mark. The segment at 187 to 295 (PVSKYANNLT…KHLAHFGIDM (109 aa)) adopts a UBP-type; degenerate zinc-finger fold. Zn(2+) contacts are provided by cysteine 211, cysteine 214, cysteine 231, and histidine 244. Residue lysine 311 forms a Glycyl lysine isopeptide (Lys-Gly) (interchain with G-Cter in SUMO2) linkage. One can recognise a USP domain in the interval 336-861 (TGLKNLGNSC…LGYMYFYRRI (526 aa)). Catalysis depends on cysteine 345, which acts as the Nucleophile. Lysine 405 is covalently cross-linked (Glycyl lysine isopeptide (Lys-Gly) (interchain with G-Cter in SUMO2)). UBA domains lie at 652 to 693 (DIDE…IVVH) and 727 to 767 (QPPE…IFSH). The active-site Proton acceptor is histidine 823.

It belongs to the peptidase C19 family. In terms of assembly, interacts with UFD1. Interacts (via UBA domains) with SIAH2 (when ubiquitinated). Interacts with BAG6; the interaction is direct and may mediate UBL4A deubiquitination. Interacts (via UBA 2 domain) with AMFR; the interaction is direct. Interacts with UBL4A; may be indirect via BAG6. Interacts with NEDD4.

The protein resides in the cytoplasm. The enzyme catalyses Thiol-dependent hydrolysis of ester, thioester, amide, peptide and isopeptide bonds formed by the C-terminal Gly of ubiquitin (a 76-residue protein attached to proteins as an intracellular targeting signal).. Specifically inhibited by spautin-1 (specific and potent autophagy inhibitor-1), a derivative of MBCQ that binds to USP13 and inhibits deubiquitinase activity. Regulated by PIK3C3/VPS34-containing complexes. The weak deubiquitinase activity in vitro suggests the existence of some mechanism that activates the enzyme. In terms of biological role, deubiquitinase that mediates deubiquitination of target proteins such as BECN1, MITF, SKP2 and USP10 and is involved in various processes such as autophagy, endoplasmic reticulum-associated degradation (ERAD), cell cycle progression or DNA damage response. Component of a regulatory loop that controls autophagy and p53/TP53 levels: mediates deubiquitination of BECN1, a key regulator of autophagy, leading to stabilize the PIK3C3/VPS34-containing complexes. Alternatively, forms with NEDD4 a deubiquitination complex, which subsequently stabilizes VPS34 to promote autophagy. Also deubiquitinates USP10, an essential regulator of p53/TP53 stability. In turn, PIK3C3/VPS34-containing complexes regulate USP13 stability, suggesting the existence of a regulatory system by which PIK3C3/VPS34-containing complexes regulate p53/TP53 protein levels via USP10 and USP13. Recruited by nuclear UFD1 and mediates deubiquitination of SKP2, thereby regulating endoplasmic reticulum-associated degradation (ERAD). Also regulates ERAD through the deubiquitination of UBL4A a component of the BAG6/BAT3 complex. Mediates stabilization of SIAH2 independently of deubiquitinase activity: binds ubiquitinated SIAH2 and acts by impairing SIAH2 autoubiquitination. Regulates the cell cycle progression by stabilizing cell cycle proteins such as SKP2 and AURKB. In addition, plays an important role in maintaining genomic stability and in DNA replication checkpoint activation via regulation of RAP80 and TOPBP1. Deubiquitinates the multifunctional protein HMGB1 and subsequently drives its nucleocytoplasmic localization and its secretion. Positively regulates type I and type II interferon signalings by deubiquitinating STAT1 but negatively regulates antiviral response by deubiquitinating STING1. The protein is Ubiquitin carboxyl-terminal hydrolase 13 (USP13) of Bos taurus (Bovine).